A 422-amino-acid chain; its full sequence is Mannose-1-phosphate guanylyltransferase regulatory subunit alpha-A (422 aa).

Residues 2 to 253 (LKAVILIGGP…DRFWSQIKSA (252 aa)) form a substrate-binding domain region. GDP-alpha-D-mannose contacts are provided by Glu85 and Gln249. The tract at residues 275–422 (LATNTEGGAK…NRSFKNQIIL (148 aa)) is hexapeptide repeat domain. Positions 358–386 (TPSDPNPNDPYAKIDSETLFRDGKLTPSI) are C-loop.

The protein belongs to the transferase hexapeptide repeat family. In terms of assembly, component of the GMPPA-GMPPB mannose-1-phosphate guanylyltransferase complex composed of 4 gmppa subunits and 8 gmppb subunits; the complex is organized into three layers, a central layer made up of 2 gmppa dimers sandwiched between two layers each made up of 2 gmppb dimers.

The protein operates within nucleotide-sugar biosynthesis; GDP-alpha-D-mannose biosynthesis; GDP-alpha-D-mannose from alpha-D-mannose 1-phosphate (GTP route): step 1/1. Its function is as follows. Regulatory subunit of the GMPPA-GMPPB mannose-1-phosphate guanylyltransferase complex; reduces the catalytic activity of GMPPB when part of the complex. Mediates allosteric feedback inhibition of GMPPB catalytic activity upon binding GDP-alpha-D-mannose. Together with GMPPB regulates GDP-alpha-D-mannose levels. One of two paralogs (gmppaa and gmppab) that may have redundant functions. In Danio rerio (Zebrafish), this protein is Mannose-1-phosphate guanylyltransferase regulatory subunit alpha-A (gmppaa).